Here is a 336-residue protein sequence, read N- to C-terminus: Dihydroorotate dehydrogenase (quinone) (336 aa).

FMN is bound by residues 62-66 (AGLDK) and Thr86. Lys66 provides a ligand contact to substrate. Substrate is bound at residue 111 to 115 (NRMGF). FMN is bound by residues Asn139 and Asn172. Residue Asn172 participates in substrate binding. The Nucleophile role is filled by Ser175. Asn177 is a substrate binding site. Residues Lys217 and Thr245 each coordinate FMN. Residue 246-247 (NT) coordinates substrate. FMN contacts are provided by residues Gly268, Gly297, and 318–319 (YS).

It belongs to the dihydroorotate dehydrogenase family. Type 2 subfamily. As to quaternary structure, monomer. The cofactor is FMN.

It localises to the cell membrane. It carries out the reaction (S)-dihydroorotate + a quinone = orotate + a quinol. Its pathway is pyrimidine metabolism; UMP biosynthesis via de novo pathway; orotate from (S)-dihydroorotate (quinone route): step 1/1. In terms of biological role, catalyzes the conversion of dihydroorotate to orotate with quinone as electron acceptor. In Proteus mirabilis (strain HI4320), this protein is Dihydroorotate dehydrogenase (quinone).